Reading from the N-terminus, the 314-residue chain is Homeobox-leucine zipper protein HAT7 (314 aa).

The interval 77 to 109 (HHHLTQKSPTTTNNMNDQDQVGEEDNLSDDGSH) is disordered. Positions 82-95 (QKSPTTTNNMNDQD) are enriched in polar residues. The homeobox DNA-binding region spans 112 to 171 (LGEKKKRLNLEQVRALEKSFELGNKLEPERKMQLAKALGLQPRQIAIWFQNRRARWKTKQ). The leucine-zipper stretch occupies residues 172–207 (LERDYDSLKKQFDVLKSDNDSLLAHNKKLHAELVAL).

Belongs to the HD-ZIP homeobox family. Class I subfamily. Expressed predominantly in flowers, and in the cortex of the root and the stem.

The protein resides in the nucleus. Functionally, probable transcription factor. This chain is Homeobox-leucine zipper protein HAT7 (HAT7), found in Arabidopsis thaliana (Mouse-ear cress).